Here is a 239-residue protein sequence, read N- to C-terminus: Protein G1-like8 (239 aa).

Disordered stretches follow at residues 1 to 35 (MEGG…RYES) and 149 to 239 (KARG…ATRV). Low complexity predominate over residues 9–29 (DAQAQAQPVAQAPPAMQPMQQ). The ALOG domain occupies 32-159 (RYESQKRRDW…ARGIPYEKKK (128 aa)). Residues 157-161 (KKKRK) carry the Nuclear localization signal motif. Pro residues predominate over residues 167 to 178 (QPPPQPPLPPQH). 2 stretches are compositionally biased toward low complexity: residues 179 to 215 (QPGA…ATSQ) and 223 to 239 (TTTT…ATRV).

Belongs to the plant homeotic and developmental regulators ALOG protein family.

It localises to the nucleus. Probable transcription regulator that acts as a developmental regulator by promoting cell growth in response to light. This is Protein G1-like8 from Oryza sativa subsp. indica (Rice).